We begin with the raw amino-acid sequence, 328 residues long: Cytochrome c biogenesis protein CcsA (328 aa).

A run of 8 helical transmembrane segments spans residues 13–33, 46–66, 73–93, 101–121, 146–166, 234–254, 263–283, and 295–315; these read ISFS…LVNL, GIII…IYSG, LYES…VSYF, LNAI…SGLL, MILG…LLVI, IISL…VWAN, WDPK…YLHI, and AIVA…VNLL.

This sequence belongs to the CcmF/CycK/Ccl1/NrfE/CcsA family. In terms of assembly, may interact with Ccs1.

It localises to the plastid. The protein localises to the chloroplast thylakoid membrane. Functionally, required during biogenesis of c-type cytochromes (cytochrome c6 and cytochrome f) at the step of heme attachment. In Capsella bursa-pastoris (Shepherd's purse), this protein is Cytochrome c biogenesis protein CcsA.